A 288-amino-acid chain; its full sequence is MKLAVYGKGGIGKSTTSCNISVALAKRGKKVLQIGCDPKHDSTFTLTGFLIPTIIDTLQEKDYHYEDVWPEDVIYKGYGGVDCVEAGGPPAGAGCGGYVVGETVKLLKELNAFDEYDVILFDVLGDVVCGGFAAPLNYADYCMIVTDNGFDALFAANRIAASVREKARTHPLRLAGLIGNRTSKRDLIEKYVEAVPMPVLEVLPLIEDIRVSRVKGKTLFEMAESDPSLNYVCDYYLSIADQILARPEGVVPNDAPDRELFSLLSDFYLNPGKPQVPNPEEELDLMIV.

ATP contacts are provided by residues Gly10–Thr15 and Lys39. Ser14 is a binding site for Mg(2+). [4Fe-4S] cluster contacts are provided by Cys95 and Cys129. Asn180–Arg181 lines the ATP pocket.

It belongs to the NifH/BchL/ChlL family. Homodimer. Protochlorophyllide reductase is composed of three subunits; ChlL, ChlN and ChlB. [4Fe-4S] cluster serves as cofactor.

The catalysed reaction is chlorophyllide a + oxidized 2[4Fe-4S]-[ferredoxin] + 2 ADP + 2 phosphate = protochlorophyllide a + reduced 2[4Fe-4S]-[ferredoxin] + 2 ATP + 2 H2O. Its pathway is porphyrin-containing compound metabolism; chlorophyll biosynthesis (light-independent). In terms of biological role, component of the dark-operative protochlorophyllide reductase (DPOR) that uses Mg-ATP and reduced ferredoxin to reduce ring D of protochlorophyllide (Pchlide) to form chlorophyllide a (Chlide). This reaction is light-independent. The L component serves as a unique electron donor to the NB-component of the complex, and binds Mg-ATP. The polypeptide is Light-independent protochlorophyllide reductase iron-sulfur ATP-binding protein (Nostoc sp. (strain PCC 7120 / SAG 25.82 / UTEX 2576)).